Reading from the N-terminus, the 207-residue chain is N-(5'-phosphoribosyl)anthranilate isomerase (207 aa).

It belongs to the TrpF family.

The enzyme catalyses N-(5-phospho-beta-D-ribosyl)anthranilate = 1-(2-carboxyphenylamino)-1-deoxy-D-ribulose 5-phosphate. It functions in the pathway amino-acid biosynthesis; L-tryptophan biosynthesis; L-tryptophan from chorismate: step 3/5. This Stutzerimonas stutzeri (strain A1501) (Pseudomonas stutzeri) protein is N-(5'-phosphoribosyl)anthranilate isomerase.